The sequence spans 289 residues: BTB/POZ domain-containing protein KCTD7 (289 aa).

Residues 1-40 (MVVVTGREPDSRRPDGAMSSSDAEDDFLEPATPTATQAGH) form a disordered region. One can recognise a BTB domain in the interval 53-141 (VPLNIGGAHF…YAIGPLLEQL (89 aa)).

In terms of assembly, interacts with CUL3.

It localises to the cell membrane. The protein localises to the cytoplasm. The protein resides in the cytosol. Functionally, may be involved in the control of excitability of cortical neurons. The sequence is that of BTB/POZ domain-containing protein KCTD7 (KCTD7) from Bos taurus (Bovine).